We begin with the raw amino-acid sequence, 200 residues long: Recombination protein RecR (200 aa).

The C4-type zinc-finger motif lies at C58 to C75. Residues Q82 to P177 enclose the Toprim domain.

It belongs to the RecR family.

Its function is as follows. May play a role in DNA repair. It seems to be involved in an RecBC-independent recombinational process of DNA repair. It may act with RecF and RecO. The chain is Recombination protein RecR from Chlamydia pneumoniae (Chlamydophila pneumoniae).